The following is a 258-amino-acid chain: MPKTLTEKLNAIKAAGKGIFVPYIMAGDHEKGLDGLAETIHFLEDLGVSAIEVGIPFSDPVADGPVIEEAGLRSLAHGTSTQALVETLKTIETEIPLVIMTYFNPLFQYGVENFVKDLADTAVKGLIIPDLPHEHANFVEPFLADTDIALIPLVSLTTGIERQKELIEGAEGFVYAVAINGVTGKSGNYRADLDKHLAQLHQVADIPVLTGFGVSSQADLERFNAVSDGVIVGSKIVKALHQGEPIQDFIRQAVAYQK.

Active-site proton acceptor residues include glutamate 52 and aspartate 63.

The protein belongs to the TrpA family. Tetramer of two alpha and two beta chains.

It carries out the reaction (1S,2R)-1-C-(indol-3-yl)glycerol 3-phosphate + L-serine = D-glyceraldehyde 3-phosphate + L-tryptophan + H2O. Its pathway is amino-acid biosynthesis; L-tryptophan biosynthesis; L-tryptophan from chorismate: step 5/5. In terms of biological role, the alpha subunit is responsible for the aldol cleavage of indoleglycerol phosphate to indole and glyceraldehyde 3-phosphate. This chain is Tryptophan synthase alpha chain, found in Streptococcus pneumoniae (strain P1031).